A 395-amino-acid chain; its full sequence is tRNA-specific 2-thiouridylase MnmA (395 aa).

ATP-binding positions include 7–14 and Met33; that span reads GLSGGVDS. The segment at 95–97 is interaction with target base in tRNA; it reads NPD. Catalysis depends on Cys100, which acts as the Nucleophile. Cys100 and Cys200 are disulfide-bonded. Residue Gly124 participates in ATP binding. The interaction with tRNA stretch occupies residues 150-152; that stretch reads KDQ. Cys200 (cysteine persulfide intermediate) is an active-site residue. The interval 346–347 is interaction with tRNA; the sequence is RY.

This sequence belongs to the MnmA/TRMU family.

The protein resides in the cytoplasm. The enzyme catalyses S-sulfanyl-L-cysteinyl-[protein] + uridine(34) in tRNA + AH2 + ATP = 2-thiouridine(34) in tRNA + L-cysteinyl-[protein] + A + AMP + diphosphate + H(+). Its function is as follows. Catalyzes the 2-thiolation of uridine at the wobble position (U34) of tRNA, leading to the formation of s(2)U34. In Christiangramia forsetii (strain DSM 17595 / CGMCC 1.15422 / KT0803) (Gramella forsetii), this protein is tRNA-specific 2-thiouridylase MnmA.